The following is a 329-amino-acid chain: Beta-ketoacyl-[acyl-carrier-protein] synthase III (329 aa).

Catalysis depends on residues Cys-114 and His-255. An ACP-binding region spans residues 256–260 (QANQR). Asn-285 is an active-site residue.

Belongs to the thiolase-like superfamily. FabH family. As to quaternary structure, homodimer.

The protein resides in the cytoplasm. The enzyme catalyses malonyl-[ACP] + acetyl-CoA + H(+) = 3-oxobutanoyl-[ACP] + CO2 + CoA. The protein operates within lipid metabolism; fatty acid biosynthesis. In terms of biological role, catalyzes the condensation reaction of fatty acid synthesis by the addition to an acyl acceptor of two carbons from malonyl-ACP. Catalyzes the first condensation reaction which initiates fatty acid synthesis and may therefore play a role in governing the total rate of fatty acid production. Possesses both acetoacetyl-ACP synthase and acetyl transacylase activities. Its substrate specificity determines the biosynthesis of branched-chain and/or straight-chain of fatty acids. The protein is Beta-ketoacyl-[acyl-carrier-protein] synthase III of Thermosynechococcus vestitus (strain NIES-2133 / IAM M-273 / BP-1).